Here is a 436-residue protein sequence, read N- to C-terminus: GTPase Der (436 aa).

2 consecutive EngA-type G domains span residues 4–167 (PTVA…PTEA) and 175–351 (IKFS…QSQN). GTP contacts are provided by residues 10-17 (GRPNVGKS), 57-61 (DTGGI), 119-122 (NKVD), 181-188 (GRPNVGKS), 229-233 (DTAGM), and 294-297 (NKWD). The 85-residue stretch at 352 to 436 (TRIPSAVLND…PIRLIARKRK (85 aa)) folds into the KH-like domain.

This sequence belongs to the TRAFAC class TrmE-Era-EngA-EngB-Septin-like GTPase superfamily. EngA (Der) GTPase family. Associates with the 50S ribosomal subunit.

In terms of biological role, GTPase that plays an essential role in the late steps of ribosome biogenesis. The sequence is that of GTPase Der from Streptococcus mutans serotype c (strain ATCC 700610 / UA159).